A 318-amino-acid chain; its full sequence is Ribosomal RNA small subunit methyltransferase H (318 aa).

S-adenosyl-L-methionine-binding positions include 37–39 (GGH), Asp-57, Phe-83, Asp-104, and Gln-111.

Belongs to the methyltransferase superfamily. RsmH family.

The protein resides in the cytoplasm. The enzyme catalyses cytidine(1402) in 16S rRNA + S-adenosyl-L-methionine = N(4)-methylcytidine(1402) in 16S rRNA + S-adenosyl-L-homocysteine + H(+). Its function is as follows. Specifically methylates the N4 position of cytidine in position 1402 (C1402) of 16S rRNA. In Neisseria gonorrhoeae (strain NCCP11945), this protein is Ribosomal RNA small subunit methyltransferase H.